Here is a 1152-residue protein sequence, read N- to C-terminus: Receptor-type guanylate cyclase gcy-8 (1152 aa).

Residues 1 to 21 (MRTKKAFLLLTFNVLIYLAAC) form the signal peptide. Residues 22–506 (QETERILANN…GYRNERCDYT (485 aa)) lie on the Extracellular side of the membrane. N-linked (GlcNAc...) asparagine glycans are attached at residues N31, N55, N385, and N465. A helical transmembrane segment spans residues 507–527 (LIIIGAALILLFIVAAVSAFF). Over 528 to 1152 (AQKILEKRAL…NLKNPTGLQR (625 aa)) the chain is Cytoplasmic. In terms of domain architecture, Protein kinase spans 567–857 (RTKMSNMNYG…RIKLNVETYL (291 aa)). Residues 573–581 (MNYGSRNHA) and K593 contribute to the ATP site. The stretch at 861–899 (GSLVDQMTRMMEQYANNLEKLVAERTGMLEEANQRADRL) forms a coiled coil. The Guanylate cyclase domain occupies 927–1057 (TVLFSDIVGF…DTVNMASRME (131 aa)). Mg(2+) contacts are provided by D932, I933, and D976.

The protein belongs to the adenylyl cyclase class-4/guanylyl cyclase family. Expressed bilaterally in AFD sensory neurons.

The protein localises to the cell membrane. The protein resides in the cell projection. It is found in the cilium. The enzyme catalyses GTP = 3',5'-cyclic GMP + diphosphate. Its activity is regulated as follows. Inhibited by chloride with an IC(50) of 60 mM. Functionally, guanylate cyclase involved in the production of the second messenger cGMP. Regulates thermotaxis responses in AFD sensory neurons. May regulate AFD neuronal activity such as calcium responses to temperature gradients. Maintains the microvilli receptive ending morphology of the AFD thermosensory neurons by regulating cGMP levels downstream of kcc-3. cGMP levels antagonize the actin cytoskeleton regulator wsp-1. This chain is Receptor-type guanylate cyclase gcy-8, found in Caenorhabditis elegans.